A 95-amino-acid polypeptide reads, in one-letter code: uncharacterized protein (95 aa).

Low complexity predominate over residues 1-12 (MQNFMNNLSGGS). The interval 1–27 (MQNFMNNLSGGSNKEGGEKSNDFLSSA) is disordered.

This is an uncharacterized protein from Schizosaccharomyces pombe (strain 972 / ATCC 24843) (Fission yeast).